The following is a 510-amino-acid chain: MQRVGAASPTCSSLQAPAAAPPILTISPHHRVKTAETAAEPDLLEPTGVHHPFHSLSPLTEARAWAAREGQYFNGLIEANGGASVSKGHPDLAVTFLTDHASCEWFFSQRQEVLDRQDGAYFGPLKCKKQYIGESLPTLASNQKESHQVLREHKLRVFRSRVPFAQSAMTNATDTFYKNLRDNGTGDYTVVYDFFLQQTIHFLHEWIYGLGVEGGQPLPPFKDFMNANPLDVSVLLELEMDTPVANLAAKLAQRSKKPSAEQLASVESIAEAIRSSDVWAGFVEMLEDSNVNTKDLERSFMFTTNFQSAGAIAKGMMPVVATLTNNPEFLEKLRKEVDGKDLTFQSIRGAENFPLLDSFHWEINRMFPAPAFTVKEAKMDLVVPTSSGKKYKVKKGELLMMEQALGQMDPSVFGPDAREFNPERFVDNPELKKKVFAYGYVDHDKVDGQWGCAAHAIGMLDGILKIIYGRWVQEAEWELTSVPVISPDEFLAEVGPADMSFAKVTSRKKM.

The transit peptide at 1-31 (MQRVGAASPTCSSLQAPAAAPPILTISPHHR) directs the protein to the mitochondrion. A heme-binding site is contributed by Cys-452.

The protein belongs to the cytochrome P450 family. The cofactor is heme.

It localises to the mitochondrion. It carries out the reaction (13S)-hydroperoxy-(9Z,11E,15Z)-octadecatrienoate = plasmodiophorol A. The catalysed reaction is (13S)-hydroperoxy-(9Z,11E,15Z)-octadecatrienoate = plasmodiophorol B. It catalyses the reaction (13S)-hydroperoxy-(9Z,11E,15Z)-octadecatrienoate = ectocarpin A + H2O. The enzyme catalyses (15S)-hydroperoxy-(5Z,8Z,11Z,13E,17Z)-eicosapentaenoate = ectocarpin B + H2O. It carries out the reaction (15S)-hydroperoxy-(5Z,8Z,11Z,13E,17Z)-eicosapentaenoate = ectocarpin C. The catalysed reaction is (15S)-hydroperoxy-(5Z,8Z,11Z,13E,17Z)-eicosapentaenoate + H2O = ectocarpin D. It catalyses the reaction (15S)-hydroperoxy-(5Z,8Z,11Z,13E,17Z)-eicosapentaenoate = 14-oxo-15-hydroxy-(5Z,8Z,11Z,17Z)-eicosatetraenoate. Its pathway is lipid metabolism; oxylipin biosynthesis. Its function is as follows. Cytochrome P450 hydroperoxide bicyclase involved in the metabolism of oxylipins 'ectocarpins' natural products, such as hybridalactone, ecklonilactones and derivatives. Isomerizes the hydroperoxides into epoxyalcohols via epoxyallylic radical. Can use alpha-linolenic acid 13(S)-hydroperoxide (13-HPOTE) and eicosapentaenoic acid 15(S)-hydroperoxide (15-HPEPE) as preferred substrate to produce corresponding heterobicyclic oxylipins, such as plasmodiophorol A (6-oxabicyclo[3.1.0]hexane), plasmodiophorol B (2-oxabicyclo[2.2.1]heptane) and plasmodiophorol C (4-hydroxymethyl-1,2-dihydroxycyclopentane) as well as ectocarpin A (3-propenyl-6-oxabicyclo[3.1.0]hexane) formed at about 15:3:3:1 ratio for 13-HPOTE, and analogous to plasmodiophorols A and B including ectocarpin B (3-[(1'E)-propenyl]-6-oxabicyclo[3.1.0]hexane), ectocarpin C, 14-oxo-15-hydroxy-5,8,11,17-eicosate-traenoic acid and ectocarpin D for 15-HPEPE. Barely able to use linoleic acid 13-hydroperoxide (13-HPODE), linoleic acid 9-hydroperoxide (9-HPODE), eicosapentaenoic acid 15-hydroperoxide (15-HPEPE), and alpha-linolenic acid 9-hydroperoxide (9-HPOTE) as substrates. The protein is Hydroperoxide bicyclase CYP5164A3, mitochondrial of Ectocarpus siliculosus (Brown alga).